Consider the following 351-residue polypeptide: Photosystem II D2 protein (351 aa).

The helical transmembrane segment at Cys39–Thr59 threads the bilayer. His116 serves as a coordination point for chlorophyll a. A helical transmembrane segment spans residues Gly123–Pro139. Pheophytin a-binding residues include Gln128 and Asn141. A helical transmembrane segment spans residues Val151–Ala164. His196 serves as a coordination point for chlorophyll a. The chain crosses the membrane as a helical span at residues Gly206–Asp226. Residues His213 and Phe260 each coordinate a plastoquinone. His213 lines the Fe cation pocket. His267 is a Fe cation binding site. A helical transmembrane segment spans residues Gly277–Arg293.

Belongs to the reaction center PufL/M/PsbA/D family. In terms of assembly, PSII is composed of 1 copy each of membrane proteins PsbA, PsbB, PsbC, PsbD, PsbE, PsbF, PsbH, PsbI, PsbJ, PsbK, PsbL, PsbM, PsbT, PsbX, PsbY, PsbZ, Psb30/Ycf12, at least 3 peripheral proteins of the oxygen-evolving complex and a large number of cofactors. It forms dimeric complexes. Requires The D1/D2 heterodimer binds P680, chlorophylls that are the primary electron donor of PSII, and subsequent electron acceptors. It shares a non-heme iron and each subunit binds pheophytin, quinone, additional chlorophylls, carotenoids and lipids. There is also a Cl(-1) ion associated with D1 and D2, which is required for oxygen evolution. The PSII complex binds additional chlorophylls, carotenoids and specific lipids. as cofactor.

Its subcellular location is the plastid. The protein resides in the chloroplast thylakoid membrane. The catalysed reaction is 2 a plastoquinone + 4 hnu + 2 H2O = 2 a plastoquinol + O2. Photosystem II (PSII) is a light-driven water:plastoquinone oxidoreductase that uses light energy to abstract electrons from H(2)O, generating O(2) and a proton gradient subsequently used for ATP formation. It consists of a core antenna complex that captures photons, and an electron transfer chain that converts photonic excitation into a charge separation. The D1/D2 (PsbA/PsbD) reaction center heterodimer binds P680, the primary electron donor of PSII as well as several subsequent electron acceptors. D2 is needed for assembly of a stable PSII complex. This is Photosystem II D2 protein from Gracilaria tenuistipitata var. liui (Red alga).